Here is a 147-residue protein sequence, read N- to C-terminus: Cystatin-9-like (147 aa).

Positions 1-28 (MLGLPWKGGLSWALLLLLLGSQILLIYA) are cleaved as a signal peptide. Cys98 and Cys108 are oxidised to a cystine. N-linked (GlcNAc...) asparagine glycosylation is found at Asn117 and Asn139. A disulfide bond links Cys122 and Cys142.

The protein belongs to the cystatin family. As to expression, specifically expressed in testis.

The protein resides in the secreted. The protein is Cystatin-9-like (CST9L) of Homo sapiens (Human).